The chain runs to 237 residues: Uridylate kinase (237 aa).

Lysine 11 to glycine 14 contacts ATP. The tract at residues glycine 18–glycine 23 is involved in allosteric activation by GTP. Glycine 52 is a UMP binding site. Residues glycine 53 and arginine 57 each coordinate ATP. Residues aspartate 72 and serine 133–threonine 140 contribute to the UMP site. The ATP site is built by glutamine 161, tyrosine 167, and aspartate 170.

This sequence belongs to the UMP kinase family. As to quaternary structure, homohexamer.

The protein localises to the cytoplasm. The enzyme catalyses UMP + ATP = UDP + ADP. It participates in pyrimidine metabolism; CTP biosynthesis via de novo pathway; UDP from UMP (UMPK route): step 1/1. Allosterically activated by GTP. Inhibited by UTP. Its function is as follows. Catalyzes the reversible phosphorylation of UMP to UDP. The sequence is that of Uridylate kinase from Cutibacterium acnes (strain DSM 16379 / KPA171202) (Propionibacterium acnes).